Reading from the N-terminus, the 618-residue chain is UvrABC system protein C (618 aa).

Residues threonine 20 to valine 98 enclose the GIY-YIG domain. Residues aspartate 207–methionine 242 form the UVR domain.

The protein belongs to the UvrC family. As to quaternary structure, interacts with UvrB in an incision complex.

The protein localises to the cytoplasm. In terms of biological role, the UvrABC repair system catalyzes the recognition and processing of DNA lesions. UvrC both incises the 5' and 3' sides of the lesion. The N-terminal half is responsible for the 3' incision and the C-terminal half is responsible for the 5' incision. In Xanthomonas campestris pv. campestris (strain 8004), this protein is UvrABC system protein C.